The following is a 291-amino-acid chain: N-acetylmannosamine kinase (291 aa).

ATP contacts are provided by residues 5–12 (AIDIGGTK) and 132–139 (GVGGGVVS). The Zn(2+) site is built by H156, C166, C168, and C173.

It belongs to the ROK (NagC/XylR) family. NanK subfamily. In terms of assembly, homodimer.

The enzyme catalyses an N-acyl-D-mannosamine + ATP = an N-acyl-D-mannosamine 6-phosphate + ADP + H(+). The protein operates within amino-sugar metabolism; N-acetylneuraminate degradation; D-fructose 6-phosphate from N-acetylneuraminate: step 2/5. In terms of biological role, catalyzes the phosphorylation of N-acetylmannosamine (ManNAc) to ManNAc-6-P. This chain is N-acetylmannosamine kinase, found in Escherichia coli O127:H6 (strain E2348/69 / EPEC).